A 1045-amino-acid chain; its full sequence is Protein phosphatase Slingshot (1045 aa).

A compositionally biased stretch (polar residues) spans 1–20 (MALVTVQRSPSVAGSCSNSD). Disordered regions lie at residues 1–35 (MALV…GNDR), 58–80 (TQSE…SNNS), 143–194 (KVGG…DNKN), and 306–325 (ESRR…EKEE). A compositionally biased stretch (low complexity) spans 66–80 (TDSTRSSNSTQSNNS). The segment covering 149–174 (GTKSSTSPAVPTQRQLSVEQTATEAS) has biased composition (polar residues). Residues 175–185 (SKCDKTADKEN) show a composition bias toward basic and acidic residues. In terms of domain architecture, DEK-C spans 324-379 (EETESVIKMKLKAIMMSVDLDEVTSKYIRGRLEEILDMDLGEYKSFIDAEMLVILG). Residues 383–524 (APTKIFEHVY…LETYSGMLDA (142 aa)) enclose the Tyrosine-protein phosphatase domain. Cys468 acts as the Phosphocysteine intermediate in catalysis. The span at 529–547 (EKLQRSKSETNLKSTKDAR) shows a compositional bias: basic and acidic residues. Disordered regions lie at residues 529–631 (EKLQ…PERS), 699–799 (SHLG…GDNR), and 1001–1045 (ACSA…SDSS). The span at 560-569 (ALNQAKSKST) shows a compositional bias: polar residues. Residues 586–601 (MHRRSIAQKSQRRMVR) are compositionally biased toward basic residues. The span at 602-625 (RSSSTSPKTQTAVVTKQQSQSMEN) shows a compositional bias: polar residues. Low complexity predominate over residues 704–713 (SVSGSSSGNI). Ser719 is subject to Phosphoserine. The span at 721 to 732 (CSDVFSSQVDSV) shows a compositional bias: low complexity. Composition is skewed to polar residues over residues 764–774 (TPQQQKQQSNA) and 1008–1021 (KKTT…SSPV). The segment covering 1029–1045 (SAASNSNSSASNSSDSS) has biased composition (low complexity).

The protein belongs to the protein-tyrosine phosphatase family. In terms of assembly, interacts with actin.

The protein localises to the cytoplasm. It localises to the cytoskeleton. It catalyses the reaction O-phospho-L-tyrosyl-[protein] + H2O = L-tyrosyl-[protein] + phosphate. The enzyme catalyses O-phospho-L-seryl-[protein] + H2O = L-seryl-[protein] + phosphate. The catalysed reaction is O-phospho-L-threonyl-[protein] + H2O = L-threonyl-[protein] + phosphate. Its function is as follows. Protein phosphatase which regulates actin filament dynamics. Dephosphorylates and activates the actin binding/depolymerizing factor tsr/cofilin, which subsequently binds to actin filaments and stimulates their disassembly. Required for axon growth. The chain is Protein phosphatase Slingshot (ssh) from Drosophila melanogaster (Fruit fly).